Consider the following 785-residue polypeptide: B-cell scaffold protein with ankyrin repeats (785 aa).

The interaction with ITPR2 stretch occupies residues 1 to 154; that stretch reads MLPAAPGKGL…DYISVIQSII (154 aa). In terms of domain architecture, TIR spans 25 to 153; sequence NTKDIIMIYE…EDYISVIQSI (129 aa). One can recognise a DBB domain in the interval 200–327; it reads VLPTEIPCEN…EIPYYEFQSL (128 aa). 2 ANK repeats span residues 342 to 371 and 378 to 408; these read ELPT…ATWA and EGSD…EIDI. Disordered regions lie at residues 433–480, 493–514, 538–578, and 606–625; these read PAFH…SESS, GADP…LPPP, QMER…EDPY, and FIIN…PPKE. Residues 553 to 568 are compositionally biased toward basic and acidic residues; it reads ETGDEPKGEKEKKEEE. The segment covering 569–578 has biased composition (acidic residues); that stretch reads KEQEEEEDPY. Residues 611–621 show a composition bias toward pro residues; it reads PPAPTPRPTSI.

In terms of assembly, interacts with LYN, ITPR1 and ITPR2. In terms of processing, phosphorylated on tyrosines upon BCR activation. In terms of tissue distribution, expressed in B-cell but not T-cell or myeloid cell lines. Highest expression in CD19(+) B-cells, with very low expression in other cell populations.

Functionally, involved in B-cell receptor (BCR)-induced Ca(2+) mobilization from intracellular stores. Promotes Lyn-mediated phosphorylation of IP3 receptors 1 and 2. The polypeptide is B-cell scaffold protein with ankyrin repeats (BANK1) (Homo sapiens (Human)).